A 268-amino-acid chain; its full sequence is Proenkephalin-A (268 aa).

The N-terminal stretch at 1-24 (MARLLRLCTWLVALGPGLLATVQA) is a signal peptide. Intrachain disulfides connect cysteine 26-cysteine 48, cysteine 30-cysteine 52, and cysteine 33-cysteine 65. Residues 163 to 184 (TGDDRDRENHHQEGGDSDEGVS) are disordered. Residues 164–176 (GDDRDRENHHQEG) show a composition bias toward basic and acidic residues. 2 propeptides span residues 197-208 (SPQVEDEAKELQ) and 218-228 (VGRPEWWMDYQ). Position 252 is a phosphoserine (serine 252).

This sequence belongs to the opioid neuropeptide precursor family. In terms of processing, proenkephalin-A is cleaved by CTSL to generate Met-enkephalin. Post-translationally, processed and degraded by ACE. Probably cleaved by ACE. In terms of processing, processed by ACE to generate Met-enkephalin in the nucleus accumbens of the brain. Post-translationally, the N-terminal domain contains 6 conserved cysteines thought to be involved in disulfide bonding and/or processing.

Its subcellular location is the cytoplasmic vesicle. It localises to the secretory vesicle. The protein resides in the chromaffin granule lumen. It is found in the secreted. Functionally, neuropeptide that competes with and mimic the effects of opiate drugs. They play a role in a number of physiologic functions, including pain perception and responses to stress. In terms of biological role, met-enkephalin-Arg-Phe neuropeptide acts as a strong ligand of Mu-type opioid receptor OPRM1. Met-enkephalin-Arg-Phe-binding to OPRM1 in the nucleus accumbens of the brain increases activation of OPRM1, leading to long-term synaptic depression of glutamate release. Its function is as follows. Increases glutamate release in the striatum and decreases GABA concentration in the striatum. Increases glutamate release in the striatum. This chain is Proenkephalin-A (PENK), found in Cavia porcellus (Guinea pig).